The following is a 165-amino-acid chain: Nucleotide-binding protein TGRD_519 (165 aa).

Belongs to the YajQ family.

Nucleotide-binding protein. The sequence is that of Nucleotide-binding protein TGRD_519 from Endomicrobium trichonymphae.